The following is a 317-amino-acid chain: GTPase Era (317 aa).

An Era-type G domain is found at 17 to 190 (RAGFACFVGR…ADLLTPLLPE (174 aa)). Residues 25–32 (GRPNAGKS) are G1. A GTP-binding site is contributed by 25–32 (GRPNAGKS). The tract at residues 51-55 (QTTRH) is G2. The G3 stretch occupies residues 72 to 75 (DTPG). Residues 72 to 76 (DTPGL) and 135 to 138 (TKTD) contribute to the GTP site. Residues 135–138 (TKTD) form a G4 region. Residues 169 to 171 (VSA) are G5. The region spanning 221 to 303 (VRDELPHSIA…FLDLHVKVAK (83 aa)) is the KH type-2 domain.

It belongs to the TRAFAC class TrmE-Era-EngA-EngB-Septin-like GTPase superfamily. Era GTPase family. Monomer.

The protein resides in the cytoplasm. The protein localises to the cell membrane. An essential GTPase that binds both GDP and GTP, with rapid nucleotide exchange. Plays a role in 16S rRNA processing and 30S ribosomal subunit biogenesis and possibly also in cell cycle regulation and energy metabolism. In Streptomyces coelicolor (strain ATCC BAA-471 / A3(2) / M145), this protein is GTPase Era.